The following is a 391-amino-acid chain: Formate-dependent phosphoribosylglycinamide formyltransferase (391 aa).

N(1)-(5-phospho-beta-D-ribosyl)glycinamide-binding positions include 18–19 (EL) and Glu78. ATP-binding positions include Arg110, Lys151, 156–161 (SSGKGQ), 191–194 (EEFI), and Glu199. Positions 115 to 305 (ELVSRDLKIK…EFELHLRAFL (191 aa)) constitute an ATP-grasp domain. 2 residues coordinate Mg(2+): Glu264 and Glu276. Residues Asp283, Lys353, and 360 to 361 (RR) each bind N(1)-(5-phospho-beta-D-ribosyl)glycinamide.

This sequence belongs to the PurK/PurT family. In terms of assembly, homodimer.

The catalysed reaction is N(1)-(5-phospho-beta-D-ribosyl)glycinamide + formate + ATP = N(2)-formyl-N(1)-(5-phospho-beta-D-ribosyl)glycinamide + ADP + phosphate + H(+). It participates in purine metabolism; IMP biosynthesis via de novo pathway; N(2)-formyl-N(1)-(5-phospho-D-ribosyl)glycinamide from N(1)-(5-phospho-D-ribosyl)glycinamide (formate route): step 1/1. In terms of biological role, involved in the de novo purine biosynthesis. Catalyzes the transfer of formate to 5-phospho-ribosyl-glycinamide (GAR), producing 5-phospho-ribosyl-N-formylglycinamide (FGAR). Formate is provided by PurU via hydrolysis of 10-formyl-tetrahydrofolate. The sequence is that of Formate-dependent phosphoribosylglycinamide formyltransferase from Prochlorococcus marinus (strain MIT 9312).